Here is a 188-residue protein sequence, read N- to C-terminus: Cell division protein SepF (188 aa).

The segment covering 152–162 has biased composition (polar residues); it reads TSHDEASTPTV. Positions 152 to 188 are disordered; sequence TSHDEASTPTVVSRDAEAEQQQEAAAAPSPAWGATAL.

Belongs to the SepF family. In terms of assembly, homodimer. Interacts with FtsZ.

It is found in the cytoplasm. Its function is as follows. Cell division protein that is part of the divisome complex and is recruited early to the Z-ring. Probably stimulates Z-ring formation, perhaps through the cross-linking of FtsZ protofilaments. Its function overlaps with FtsA. In Parasynechococcus marenigrum (strain WH8102), this protein is Cell division protein SepF.